The following is a 596-amino-acid chain: Choline dehydrogenase, mitochondrial (596 aa).

The transit peptide at 1–34 directs the protein to the mitochondrion; that stretch reads MWQVLRGWRKGWQSPRGALAWAVQGQPCPPCSRA. Position 44-73 (44-73) interacts with FAD; that stretch reads TFVVVGAGSAGCVLASRLTEDPNHRVLLLE. Position 438 is an N6-succinyllysine (Lys-438). N6-acetyllysine; alternate is present on residues Lys-486 and Lys-498. An N6-succinyllysine; alternate mark is found at Lys-486 and Lys-498. His-513 serves as the catalytic Proton acceptor. N6-acetyllysine is present on Lys-582.

This sequence belongs to the GMC oxidoreductase family. Requires FAD as cofactor. Post-translationally, acetylation of Lys-498 is observed in liver mitochondria from fasted mice but not from fed mice.

The protein resides in the mitochondrion inner membrane. The catalysed reaction is choline + A = betaine aldehyde + AH2. It participates in amine and polyamine biosynthesis; betaine biosynthesis via choline pathway; betaine aldehyde from choline (cytochrome c reductase route): step 1/1. The protein is Choline dehydrogenase, mitochondrial (Chdh) of Mus musculus (Mouse).